Reading from the N-terminus, the 539-residue chain is Probable malate:quinone oxidoreductase (539 aa).

Belongs to the MQO family. Requires FAD as cofactor.

The enzyme catalyses (S)-malate + a quinone = a quinol + oxaloacetate. It functions in the pathway carbohydrate metabolism; tricarboxylic acid cycle; oxaloacetate from (S)-malate (quinone route): step 1/1. This is Probable malate:quinone oxidoreductase from Sodalis glossinidius (strain morsitans).